A 1235-amino-acid chain; its full sequence is Phosphorylase b kinase regulatory subunit alpha, liver isoform (1235 aa).

Positions 636–655 are disordered; that stretch reads FSPDSEPDLGGYLEDSSPQE. A phosphoserine mark is found at Ser695, Ser729, and Ser735. Positions 807–837 are calmodulin-binding; that stretch reads LSELYGKAGLNQEWSLIRYISGLLRKKVEVL. Phosphoserine is present on residues Ser983, Ser1015, and Ser1044. The disordered stretch occupies residues 1033–1060; it reads SIKSVRSSTPSSPTGTSSTDSGGQHLGW. Positions 1039-1055 are enriched in low complexity; it reads SSTPSSPTGTSSTDSGG. A calmodulin-binding region spans residues 1059 to 1099; it reads GWGEQQGQWLRRRRLDGAINRVPVGFYQKVWKILQKCHGLS. The S-farnesyl cysteine moiety is linked to residue Cys1232.

Belongs to the phosphorylase b kinase regulatory chain family. Hexadecamer of 4 heterotetramers, each composed of alpha, beta, gamma, and delta subunits. Alpha (PHKA1 or PHKA2) and beta (PHKB) are regulatory subunits, gamma (PHKG1 or PHKG2) is the catalytic subunit, and delta is calmodulin. In terms of processing, although the final Cys may be farnesylated, the terminal tripeptide is probably not removed, and the C-terminus is not methylated.

It is found in the cell membrane. It functions in the pathway glycan biosynthesis; glycogen metabolism. Its activity is regulated as follows. By phosphorylation of various serine residues and by calcium. In terms of biological role, phosphorylase b kinase catalyzes the phosphorylation of serine in certain substrates, including troponin I. The alpha chain may bind calmodulin. This is Phosphorylase b kinase regulatory subunit alpha, liver isoform (Phka2) from Mus musculus (Mouse).